The following is a 785-amino-acid chain: Endonuclease MutS2 (785 aa).

An ATP-binding site is contributed by 334–341 (GPNTGGKT). The Smr domain maps to 710 to 785 (LDLRGYNVED…GVGATIAELK (76 aa)).

The protein belongs to the DNA mismatch repair MutS family. MutS2 subfamily. Homodimer. Binds to stalled ribosomes, contacting rRNA.

Its function is as follows. Endonuclease that is involved in the suppression of homologous recombination and thus may have a key role in the control of bacterial genetic diversity. Functionally, acts as a ribosome collision sensor, splitting the ribosome into its 2 subunits. Detects stalled/collided 70S ribosomes which it binds and splits by an ATP-hydrolysis driven conformational change. Acts upstream of the ribosome quality control system (RQC), a ribosome-associated complex that mediates the extraction of incompletely synthesized nascent chains from stalled ribosomes and their subsequent degradation. Probably generates substrates for RQC. In Brevibacillus brevis (strain 47 / JCM 6285 / NBRC 100599), this protein is Endonuclease MutS2.